Reading from the N-terminus, the 132-residue chain is Small ribosomal subunit protein uS8 (132 aa).

This sequence belongs to the universal ribosomal protein uS8 family. Part of the 30S ribosomal subunit. Contacts proteins S5 and S12.

One of the primary rRNA binding proteins, it binds directly to 16S rRNA central domain where it helps coordinate assembly of the platform of the 30S subunit. This Streptococcus pneumoniae (strain Taiwan19F-14) protein is Small ribosomal subunit protein uS8.